The primary structure comprises 223 residues: MKLFIFTCLLAVALAKHKSEQQSSSEESVSISQEKFKDKNMDTISSEETICASLCKEATKNTPKMAFFSRSSSEEFADIHRENKKDQLYQKWMVPQYNPDFYQRPVVMSPWNQIYTRPYPIVLPTLGKEQISTIEDILKKTTAVESSSSSSTEKSTDVFIKKTKMDEVQKLIQSLLNIIHEYSQKAFWSQTLEDVDQYLKFVMPWNHYNTNADQVDASQERQA.

Positions 1 to 15 (MKLFIFTCLLAVALA) are cleaved as a signal peptide. 8 positions are modified to phosphoserine: Ser23, Ser24, Ser25, Ser28, Ser46, Ser71, Ser72, and Ser73. 2 consecutive repeats follow at residues 76–128 (FADI…TLGK) and 129–223 (EQIS…ERQA). Phosphoserine occurs at positions 132, 147, and 155.

The protein belongs to the alpha-casein family. Mammary gland specific. Secreted in milk.

The protein resides in the secreted. Functionally, important role in the capacity of milk to transport calcium phosphate. The sequence is that of Alpha-S2-casein (CSN1S2) from Cavia porcellus (Guinea pig).